The primary structure comprises 258 residues: Acyl-[acyl-carrier-protein]--UDP-N-acetylglucosamine O-acyltransferase (258 aa).

This sequence belongs to the transferase hexapeptide repeat family. LpxA subfamily. Homotrimer.

The protein resides in the cytoplasm. It carries out the reaction a (3R)-hydroxyacyl-[ACP] + UDP-N-acetyl-alpha-D-glucosamine = a UDP-3-O-[(3R)-3-hydroxyacyl]-N-acetyl-alpha-D-glucosamine + holo-[ACP]. It functions in the pathway glycolipid biosynthesis; lipid IV(A) biosynthesis; lipid IV(A) from (3R)-3-hydroxytetradecanoyl-[acyl-carrier-protein] and UDP-N-acetyl-alpha-D-glucosamine: step 1/6. Its function is as follows. Involved in the biosynthesis of lipid A, a phosphorylated glycolipid that anchors the lipopolysaccharide to the outer membrane of the cell. This Pseudomonas fluorescens (strain ATCC BAA-477 / NRRL B-23932 / Pf-5) protein is Acyl-[acyl-carrier-protein]--UDP-N-acetylglucosamine O-acyltransferase.